The following is a 480-amino-acid chain: Glycogen synthase 1 (480 aa).

K15 contributes to the ADP-alpha-D-glucose binding site.

It belongs to the glycosyltransferase 1 family. Bacterial/plant glycogen synthase subfamily.

The catalysed reaction is [(1-&gt;4)-alpha-D-glucosyl](n) + ADP-alpha-D-glucose = [(1-&gt;4)-alpha-D-glucosyl](n+1) + ADP + H(+). The protein operates within glycan biosynthesis; glycogen biosynthesis. Synthesizes alpha-1,4-glucan chains using ADP-glucose. This chain is Glycogen synthase 1 (glgA1), found in Rhizobium radiobacter (Agrobacterium tumefaciens).